Reading from the N-terminus, the 620-residue chain is 1-deoxy-D-xylulose-5-phosphate synthase (620 aa).

Thiamine diphosphate contacts are provided by residues H75 and 116 to 118; that span reads AHS. Mg(2+) is bound at residue D147. Residues 148-149, N177, Y284, and E366 contribute to the thiamine diphosphate site; that span reads GA. N177 is a binding site for Mg(2+).

Belongs to the transketolase family. DXPS subfamily. In terms of assembly, homodimer. It depends on Mg(2+) as a cofactor. Requires thiamine diphosphate as cofactor.

The catalysed reaction is D-glyceraldehyde 3-phosphate + pyruvate + H(+) = 1-deoxy-D-xylulose 5-phosphate + CO2. Its pathway is metabolic intermediate biosynthesis; 1-deoxy-D-xylulose 5-phosphate biosynthesis; 1-deoxy-D-xylulose 5-phosphate from D-glyceraldehyde 3-phosphate and pyruvate: step 1/1. Its function is as follows. Catalyzes the acyloin condensation reaction between C atoms 2 and 3 of pyruvate and glyceraldehyde 3-phosphate to yield 1-deoxy-D-xylulose-5-phosphate (DXP). The polypeptide is 1-deoxy-D-xylulose-5-phosphate synthase (Bordetella bronchiseptica (strain ATCC BAA-588 / NCTC 13252 / RB50) (Alcaligenes bronchisepticus)).